Consider the following 144-residue polypeptide: Transcriptional regulator MraZ (144 aa).

2 SpoVT-AbrB domains span residues 5–47 and 77–120; these read TYTP…PRAE and TDEQ…DAQA.

Belongs to the MraZ family. As to quaternary structure, forms oligomers.

The protein localises to the cytoplasm. It is found in the nucleoid. The polypeptide is Transcriptional regulator MraZ (Mycolicibacterium vanbaalenii (strain DSM 7251 / JCM 13017 / BCRC 16820 / KCTC 9966 / NRRL B-24157 / PYR-1) (Mycobacterium vanbaalenii)).